We begin with the raw amino-acid sequence, 930 residues long: Short transient receptor potential channel 6 (930 aa).

The segment at 1–27 is disordered; sequence MSQSPRFVTRRGGSLKAAPGAGTRRNE. Residues 1-437 are Cytoplasmic-facing; it reads MSQSPRFVTR…CSKMGKILRG (437 aa). 4 ANK repeats span residues 96–125, 131–160, 162–188, and 217–246; these read IEEERFLDAAEYGNIPVVRKMLEECHSLNV, MGQNALQLAVANEHLEITELLLKKENLSRV, DALLLAISKGYVRIVEAILNHPAFAEG, and HDVTPIILAAHCQEYEIVHTLLRKGARIER. Residues 438–458 form a helical membrane-spanning segment; sequence PFMKFVAHAASFTIFLGLLVM. Residues 459-486 are Extracellular-facing; the sequence is NAADRFEGTKLLPNETSTDNARQLFRMK. The chain crosses the membrane as a helical span at residues 487 to 507; that stretch reads TSCFSWMEMLIISWVIGMIWA. At 508-520 the chain is on the cytoplasmic side; sequence ECKEIWTQGPKEY. Residues 521-541 traverse the membrane as a helical segment; sequence LFELWNMLDFGMLAIFAASFI. The Extracellular segment spans residues 542-591; it reads ARFMAFWHASKAQSIIDANDTLKDLTKVTLGDNVKYYNLARIKWDPTDPQ. N-linked (GlcNAc...) asparagine glycosylation occurs at Asn-560. The chain crosses the membrane as a helical span at residues 592–612; sequence IISEGLYAIAVVLSFSRIAYI. Residues 613 to 635 are Cytoplasmic-facing; it reads LPANESFGPLQISLGRTVKDIFK. A helical transmembrane segment spans residues 636-656; sequence FMVIFIMVFVAFMIGMFNLYS. Residues 657-705 lie on the Extracellular side of the membrane; it reads YYIGAKQNEAFTTVEESFKTLFWAIFGLSEVKSVVINYNHKFIENIGYV. Residues 706–726 form a helical membrane-spanning segment; it reads LYGVYNVTMVIVLLNMLIAMI. Topologically, residues 727-930 are cytoplasmic; the sequence is NSSFQEIEDD…LEPKLEESRR (204 aa). At Ser-814 the chain carries Phosphoserine.

The protein belongs to the transient receptor (TC 1.A.4) family. STrpC subfamily. TRPC6 sub-subfamily. As to quaternary structure, homodimer; forms channel complex. Interacts with MX1 and RNF24. In terms of processing, phosphorylated by FYN, leading to an increase of TRPC6 channel activity. Post-translationally, N-glycosylated. As to expression, lung and brain.

It localises to the cell membrane. The enzyme catalyses Ca(2+)(in) = Ca(2+)(out). In terms of biological role, forms a receptor-activated non-selective calcium permeant cation channel. Probably is operated by a phosphatidylinositol second messenger system activated by receptor tyrosine kinases or G-protein coupled receptors. Activated by diacylglycerol (DAG) in a membrane-delimited fashion, independently of protein kinase C. Seems not to be activated by intracellular calcium store depletion. This Mus musculus (Mouse) protein is Short transient receptor potential channel 6.